Reading from the N-terminus, the 649-residue chain is WEB family protein At5g55860 (649 aa).

3 coiled-coil regions span residues 59 to 227, 267 to 356, and 391 to 461; these read EKVL…ACSQ, EFAK…IESV, and TINQ…MSEK. A compositionally biased stretch (basic and acidic residues) spans 443–453; the sequence is EAKAAETKALE. Positions 443-483 are disordered; sequence EAKAAETKALEQIKSMSEKTNAARNSTSSESGSQSITLSQE. Residues 456-467 are compositionally biased toward polar residues; it reads KSMSEKTNAARN. Positions 468-482 are enriched in low complexity; it reads STSSESGSQSITLSQ. The stretch at 505 to 549 forms a coiled coil; it reads AALAQVEAVRASENETLKKLETTQEEIKKLKTATEEALKKAAMAD. Residues 583-611 are disordered; that stretch reads MKMASESSPQQHYKAPKQKPVNNKLEKTK.

The protein belongs to the WEB family.

The chain is WEB family protein At5g55860 from Arabidopsis thaliana (Mouse-ear cress).